Reading from the N-terminus, the 151-residue chain is Transcriptional repressor NrdR (151 aa).

A zinc finger lies at 3–34 (CPYCGYIEDRVIDSRPTDEGSAIRRRRECSKC). Residues 49 to 139 (IMVIKKDKSR…VYRQFKDINT (91 aa)) form the ATP-cone domain.

Belongs to the NrdR family. Zn(2+) is required as a cofactor.

In terms of biological role, negatively regulates transcription of bacterial ribonucleotide reductase nrd genes and operons by binding to NrdR-boxes. This Acetivibrio thermocellus (strain ATCC 27405 / DSM 1237 / JCM 9322 / NBRC 103400 / NCIMB 10682 / NRRL B-4536 / VPI 7372) (Clostridium thermocellum) protein is Transcriptional repressor NrdR.